A 515-amino-acid polypeptide reads, in one-letter code: Putative cytochrome P450 CYP13A2 (515 aa).

Residue Cys460 coordinates heme.

The protein belongs to the cytochrome P450 family. Heme is required as a cofactor.

Cytochromes P450 are a group of heme-thiolate monooxygenases. They oxidize a variety of structurally unrelated compounds, including steroids, fatty acids, and xenobiotics. The polypeptide is Putative cytochrome P450 CYP13A2 (cyp-13A2) (Caenorhabditis elegans).